A 758-amino-acid polypeptide reads, in one-letter code: Xaa-Pro dipeptidyl-peptidase (758 aa).

Active-site charge relay system residues include serine 349, aspartate 469, and histidine 499.

The protein belongs to the peptidase S15 family. Homodimer.

It localises to the cytoplasm. The enzyme catalyses Hydrolyzes Xaa-Pro-|- bonds to release unblocked, N-terminal dipeptides from substrates including Ala-Pro-|-p-nitroanilide and (sequentially) Tyr-Pro-|-Phe-Pro-|-Gly-Pro-|-Ile.. Removes N-terminal dipeptides sequentially from polypeptides having unsubstituted N-termini provided that the penultimate residue is proline. This Streptococcus uberis (strain ATCC BAA-854 / 0140J) protein is Xaa-Pro dipeptidyl-peptidase.